The sequence spans 287 residues: Merozoite surface protein 2 (287 aa).

The N-terminal stretch at 1-20 (MKVIKTLSIINFFIFVTFNI) is a signal peptide. N-linked (GlcNAc...) asparagine glycosylation is found at Asn-22 and Asn-36. The disordered stretch occupies residues 42–248 (SMTESNPPTG…DSQKECTDGN (207 aa)). A polymorphic region region spans residues 44–213 (TESNPPTGAS…EQTESPELQS (170 aa)). Residues 54 to 112 (GSAGGSAGGSAGGSAGGSAGGSAGGSAGGSAGGSAGGSAGGSAGGSAGGSAGSGDGNGA) are compositionally biased toward gly residues. Tandem repeats lie at residues 55–58 (SAGG), 59–62 (SAGG), 63–66 (SAGG), 67–70 (SAGG), 71–74 (SAGG), 75–78 (SAGG), 79–82 (SAGG), 83–86 (SAGG), 87–90 (SAGG), 91–94 (SAGG), 95–98 (SAGG), and 99–102 (SAGG). The interval 55 to 102 (SAGGSAGGSAGGSAGGSAGGSAGGSAGGSAGGSAGGSAGGSAGGSAGG) is 12 X 4 AA tandem repeats of S-A-G-G. Residues 121–149 (SPSTPATTTTTTTTNDAEASTSTSSENPN) are compositionally biased toward low complexity. Composition is skewed to polar residues over residues 150–180 (HNNAETNQANKETQNNSNVQQDSQTKSNVPP) and 187–215 (KSPTAQPEQAENSAPTAEQTESPELQSAP). N-linked (GlcNAc...) asparagine glycosylation occurs at Asn-164. An N-linked (GlcNAc...) asparagine glycan is attached at Asn-236. Cys-244 and Cys-252 are joined by a disulfide. 2 N-linked (GlcNAc...) asparagine glycosylation sites follow: Asn-260 and Asn-261. A lipid anchor (GPI-anchor amidated asparagine) is attached at Asn-261. Positions 262–287 (SSNIASINKFVVLISATLVLSFAIFI) are cleaved as a propeptide — removed in mature form.

The protein localises to the cell membrane. May play a role in the merozoite attachment to the erythrocyte. The protein is Merozoite surface protein 2 of Plasmodium falciparum (isolate FCR-3 / Gambia).